Consider the following 1003-residue polypeptide: DNA topoisomerase 3-alpha (1003 aa).

The Toprim domain occupies 35 to 179 (KVLCVAEKND…NLRVLRARFS (145 aa)). The region spanning 197 to 617 (DQRVSDAVDV…QQVQKYKQVF (421 aa)) is the Topo IA-type catalytic domain. Catalysis depends on tyrosine 362, which acts as the O-(5'-phospho-DNA)-tyrosine intermediate. Positions 400–426 (GGPTPRNGSKSDQAHPPIHPTKYTSGL) are disordered. The segment at 658 to 685 (CPQCNKDMVLKTKKSGGFYLSCMGFPEC) adopts a C4-type zinc-finger fold. Positions 815, 817, 840, and 845 each coordinate Zn(2+). Residues 815–854 (CNCGREAVLLTVRKQGPNQGRHFYKCSNGDCNFFLWADSS) form a GRF-type 1 zinc finger. Residues 856-888 (STGGGTPTSASGPPGSSVGCPSSVGSHMDGFGS) form a disordered region. Positions 862 to 888 (PTSASGPPGSSVGCPSSVGSHMDGFGS) are enriched in low complexity. 4 residues coordinate Zn(2+): cysteine 899, cysteine 901, cysteine 924, and cysteine 932. The GRF-type 2 zinc finger occupies 899–941 (CLCGQPAVTRTVQKDGPNKGRQFHTCAKPREQQCGFFQWVDEN). The tract at residues 946–991 (SFAAPAWPGGRGKAQRPEAASKRPRAGSSDAGSTVKKPRKCSLCHQ) is disordered.

Belongs to the type IA topoisomerase family. As to quaternary structure, binds ssDNA. Interacts (via N-terminal region) with BLM; the interaction is direct. Directly interacts with RMI1. Component of the RMI complex, containing at least TOP3A, RMI1 and RMI2. The RMI complex interacts with BLM. The cofactor is Mg(2+). As to expression, highly expressed in testis.

Its subcellular location is the mitochondrion matrix. The enzyme catalyses ATP-independent breakage of single-stranded DNA, followed by passage and rejoining.. Its function is as follows. Releases the supercoiling and torsional tension of DNA introduced during the DNA replication and transcription by transiently cleaving and rejoining one strand of the DNA duplex. Introduces a single-strand break via transesterification at a target site in duplex DNA. The scissile phosphodiester is attacked by the catalytic tyrosine of the enzyme, resulting in the formation of a DNA-(5'-phosphotyrosyl)-enzyme intermediate and the expulsion of a 3'-OH DNA strand. The free DNA strand then undergoes passage around the unbroken strand thus removing DNA supercoils. Finally, in the religation step, the DNA 3'-OH attacks the covalent intermediate to expel the active-site tyrosine and restore the DNA phosphodiester backbone. As an essential component of the RMI complex it is involved in chromosome separation and the processing of homologous recombination intermediates to limit DNA crossover formation in cells. Has DNA decatenation activity. It is required for mtDNA decatenation and segregation after completion of replication, in a process that does not require BLM, RMI1 and RMI2. The chain is DNA topoisomerase 3-alpha (Top3a) from Mus musculus (Mouse).